A 398-amino-acid chain; its full sequence is Cytochrome b (398 aa).

A helical transmembrane segment spans residues 45–65; the sequence is LGSIAGIALVIQIITGVILAM. Heme b-binding residues include His95 and His109. The next 9 membrane-spanning stretches (helical) occupy residues 96-116, 129-149, 164-184, 192-212, 245-265, 277-297, 304-324, 339-359, and 366-386; these read AVGASMFFAAVYLHIARGLYY, IGIIIFLTMMATAFMGYVLPW, FSAIPLIGEFIVTWLWGGFSV, FFSLHYLLPFIIVALVMLHLV, FVGFGVYFIIFAYFIFYEPNY, PLVTPAHIVPEWYFLPFYAIL, LGGVLLMFGSIFVLFLLPWLD, MAFWIFMADCLLLGYLGGQPA, and ISRFAACYYFFHVLVALPLIG. Positions 196 and 210 each coordinate heme b.

The protein belongs to the cytochrome b family. In terms of assembly, the main subunits of complex b-c1 are: cytochrome b, cytochrome c1 and the Rieske protein. It depends on heme b as a cofactor.

Its subcellular location is the cell membrane. Component of the ubiquinol-cytochrome c reductase complex (complex III or cytochrome b-c1 complex), which is a respiratory chain that generates an electrochemical potential coupled to ATP synthesis. The chain is Cytochrome b (petB) from Rickettsia conorii (strain ATCC VR-613 / Malish 7).